Reading from the N-terminus, the 887-residue chain is Alanine--tRNA ligase (887 aa).

Zn(2+) is bound by residues histidine 564, histidine 568, cysteine 675, and histidine 679. A compositionally biased stretch (gly residues) spans glycine 851–proline 866. The disordered stretch occupies residues glycine 851–alanine 871.

It belongs to the class-II aminoacyl-tRNA synthetase family. Zn(2+) is required as a cofactor.

Its subcellular location is the cytoplasm. The enzyme catalyses tRNA(Ala) + L-alanine + ATP = L-alanyl-tRNA(Ala) + AMP + diphosphate. Its function is as follows. Catalyzes the attachment of alanine to tRNA(Ala) in a two-step reaction: alanine is first activated by ATP to form Ala-AMP and then transferred to the acceptor end of tRNA(Ala). Also edits incorrectly charged Ser-tRNA(Ala) and Gly-tRNA(Ala) via its editing domain. This is Alanine--tRNA ligase from Rhizorhabdus wittichii (strain DSM 6014 / CCUG 31198 / JCM 15750 / NBRC 105917 / EY 4224 / RW1) (Sphingomonas wittichii).